Here is a 119-residue protein sequence, read N- to C-terminus: Large ribosomal subunit protein uL18 (119 aa).

It belongs to the universal ribosomal protein uL18 family. Part of the 50S ribosomal subunit; part of the 5S rRNA/L5/L18/L25 subcomplex. Contacts the 5S and 23S rRNAs.

This is one of the proteins that bind and probably mediate the attachment of the 5S RNA into the large ribosomal subunit, where it forms part of the central protuberance. In Xylella fastidiosa (strain 9a5c), this protein is Large ribosomal subunit protein uL18.